The primary structure comprises 695 residues: Serotransferrin (695 aa).

Positions 1–19 (MRLAAGALLACAALGLCLA) are cleaved as a signal peptide. 2 Transferrin-like domains span residues 25-347 (VRWC…NLRE) and 361-680 (VKWC…NLRK). Disulfide bonds link C28–C67 and C38–C58. R42 is modified (dimethylated arginine). The Fe(3+) site is built by D82 and Y114. 17 disulfides stabilise this stretch: C137–C213, C156–C350, C177–C193, C180–C196, C190–C198, C246–C260, C358–C612, C364–C396, C374–C387, C421–C690, C436–C653, C468–C539, C492–C681, C502–C516, C513–C522, C579–C593, and C631–C636. Residues T139, R143, A145, and G146 each contribute to the hydrogencarbonate site. Residue Y207 coordinates Fe(3+). H268 contributes to the Fe(3+) binding site. A Phosphoserine modification is found at S389. The Fe(3+) site is built by D411 and Y444. Hydrogencarbonate is bound by residues T470, R474, A476, and G477. Residue N509 is glycosylated (N-linked (GlcNAc...) asparagine). Y533 contributes to the Fe(3+) binding site. H601 contributes to the Fe(3+) binding site. S682 carries the phosphoserine modification.

It belongs to the transferrin family. Monomer. Part of a complex composed of SLC40A1/ferroportin, TF/transferrin and HEPH/hephaestin that transfers iron from cells to transferrin. Expressed by the liver and secreted in plasma.

It is found in the secreted. Functionally, transferrins are iron binding transport proteins which can bind two Fe(3+) ions in association with the binding of an anion, usually bicarbonate. It is responsible for the transport of iron from sites of absorption and heme degradation to those of storage and utilization. Serum transferrin may also have a further role in stimulating cell proliferation. The sequence is that of Serotransferrin (TF) from Oryctolagus cuniculus (Rabbit).